The following is a 2677-amino-acid chain: Probable helicase senataxin (2677 aa).

Lysine 339 is covalently cross-linked (Glycyl lysine isopeptide (Lys-Gly) (interchain with G-Cter in SUMO1)). Serine 615, serine 642, and serine 878 each carry phosphoserine. Residue lysine 894 forms a Glycyl lysine isopeptide (Lys-Gly) (interchain with G-Cter in SUMO2) linkage. A phosphoserine mark is found at serine 911, serine 947, serine 956, serine 1017, and serine 1019. Residues lysine 1056 and lysine 1063 each participate in a glycyl lysine isopeptide (Lys-Gly) (interchain with G-Cter in SUMO2) cross-link. Disordered regions lie at residues 1158–1219 (KKPK…TTVS) and 1237–1258 (PVSKTPKKTHSDAKKGQNRSSN). Over residues 1176 to 1187 (PSSSVRNEGQSD) the composition is skewed to polar residues. The segment covering 1188–1205 (TNKRDLVGNDFKSIDRRT) has biased composition (basic and acidic residues). Polar residues predominate over residues 1206-1219 (STPNSRIQRATTVS). Position 1330 is a phosphoserine (serine 1330). Glycyl lysine isopeptide (Lys-Gly) (interchain with G-Cter in SUMO2) cross-links involve residues lysine 1340 and lysine 1341. Positions 1351–1385 (QRQIRPKSQKNRRRLSDCESTDVKRAGSHTAQNSD) are disordered. Residues 1354 to 1363 (IRPKSQKNRR) are compositionally biased toward basic residues. A compositionally biased stretch (basic and acidic residues) spans 1364-1375 (RLSDCESTDVKR). Serine 1366 carries the phosphoserine modification. Lysine 1415 is covalently cross-linked (Glycyl lysine isopeptide (Lys-Gly) (interchain with G-Cter in SUMO2)). Phosphoserine is present on serine 1489. The tract at residues 1579 to 1604 (FRKPGLPPPASKPLRPTTKIFSSKST) is disordered. Residues serine 1621, serine 1623, and serine 1663 each carry the phosphoserine modification. An ATP-binding site is contributed by 1963 to 1970 (GPPGTGKS). The short motif at 2070–2087 (KKELPSHVQAMHKRKEFL) is the Bipartite nuclear localization signal element. A coiled-coil region spans residues 2105–2136 (REIQRQELDENISKVSKERQELASKIKEVQGR). Position 2474 is a phosphothreonine (threonine 2474). Disordered stretches follow at residues 2474-2496 (THPPTIAPEGSRPQGGLPSSKLD), 2556-2577 (WDPQPSSPQHPGATPPTGEPGF), and 2597-2677 (LSSH…RKLL). Pro residues predominate over residues 2560 to 2573 (PSSPQHPGATPPTG). Over residues 2628–2671 (ELCHRREARAFSEGEQEKCGSETHHTRRNSRWDKRTLEQEDSSS) the composition is skewed to basic and acidic residues. Residues 2661–2677 (KRTLEQEDSSSKKRKLL) form a necessary for nuclear localization region.

This sequence belongs to the DNA2/NAM7 helicase family. Homodimer. Interacts with PER2; the interaction inhibits termination of circadian target genes. Interacts with CHD4, POLR2A, PRKDC and TRIM28. Interacts with UBE2I. Interacts (via N-terminus domain) with EXOSC9 (via C-terminus region); the interaction enhances SETX sumoylation. Interacts with NCL (via N-terminus domain). Interacts with PABPN1, PABPC1 and SF3B1. Interacts with SMN1/SMN2 and POLR2A; SMN1/SMN2 recruits SETX to POLR2A. In terms of processing, ubiquitinated. Post-translationally, sumoylated preferentially with SUMO2 or SUMO3. Highly expressed in skeletal muscle. Expressed in heart, fibroblast, placenta and liver. Weakly expressed in brain and lung. Expressed in the cortex of the kidney (highly expressed in tubular epithelial cells but low expression in the glomerulus).

The protein localises to the nucleus. The protein resides in the nucleoplasm. It localises to the nucleolus. It is found in the cytoplasm. Its subcellular location is the chromosome. The protein localises to the telomere. The protein resides in the cell projection. It localises to the axon. It is found in the growth cone. Functionally, probable RNA/DNA helicase involved in diverse aspects of RNA metabolism and genomic integrity. Plays a role in transcription regulation by its ability to modulate RNA Polymerase II (Pol II) binding to chromatin and through its interaction with proteins involved in transcription. Contributes to the mRNA splicing efficiency and splice site selection. Required for the resolution of R-loop RNA-DNA hybrid formation at G-rich pause sites located downstream of the poly(A) site, allowing XRN2 recruitment and XRN2-mediated degradation of the downstream cleaved RNA and hence efficient RNA polymerase II (RNAp II) transcription termination. Required for the 3' transcriptional termination of PER1 and CRY2, thus playing an important role in the circadian rhythm regulation. Involved in DNA double-strand breaks damage response generated by oxidative stress. In association with RRP45, targets the RNA exosome complex to sites of transcription-induced DNA damage. Plays a role in the development and maturation of germ cells: essential for male meiosis, acting at the interface of transcription and meiotic recombination, and in the process of gene silencing during meiotic sex chromosome inactivation (MSCI). May be involved in telomeric stability through the regulation of telomere repeat-containing RNA (TERRA) transcription. Plays a role in neurite outgrowth in hippocampal cells through FGF8-activated signaling pathways. Inhibits retinoic acid-induced apoptosis. The protein is Probable helicase senataxin of Homo sapiens (Human).